A 469-amino-acid chain; its full sequence is Aspartyl/glutamyl-tRNA(Asn/Gln) amidotransferase subunit B (469 aa).

This sequence belongs to the GatB/GatE family. GatB subfamily. As to quaternary structure, heterotrimer of A, B and C subunits.

The enzyme catalyses L-glutamyl-tRNA(Gln) + L-glutamine + ATP + H2O = L-glutaminyl-tRNA(Gln) + L-glutamate + ADP + phosphate + H(+). It catalyses the reaction L-aspartyl-tRNA(Asn) + L-glutamine + ATP + H2O = L-asparaginyl-tRNA(Asn) + L-glutamate + ADP + phosphate + 2 H(+). Its function is as follows. Allows the formation of correctly charged Asn-tRNA(Asn) or Gln-tRNA(Gln) through the transamidation of misacylated Asp-tRNA(Asn) or Glu-tRNA(Gln) in organisms which lack either or both of asparaginyl-tRNA or glutaminyl-tRNA synthetases. The reaction takes place in the presence of glutamine and ATP through an activated phospho-Asp-tRNA(Asn) or phospho-Glu-tRNA(Gln). The chain is Aspartyl/glutamyl-tRNA(Asn/Gln) amidotransferase subunit B from Methanococcus maripaludis (strain C5 / ATCC BAA-1333).